The chain runs to 72 residues: Conotoxin TxMMSK-04 (72 aa).

A signal peptide spans 1–20 (MMSKLGVLLTICLLLFPLTA). Positions 21-51 (VPLDGDQPADRPAERMQDGISSEHHPFFDSV) are excised as a propeptide. Gln55 bears the Pyrrolidone carboxylic acid mark. Intrachain disulfides connect Cys57–Cys71, Cys58–Cys67, and Cys63–Cys70. Pro69 carries the post-translational modification 4-hydroxyproline. Cys71 is modified (cysteine amide).

The protein belongs to the conotoxin M superfamily. Expressed by the venom duct.

The protein resides in the secreted. This is Conotoxin TxMMSK-04 from Conus textile (Cloth-of-gold cone).